A 507-amino-acid chain; its full sequence is Sperm-associated antigen 6 (507 aa).

8 ARM repeats span residues 31-70 (PQNI…RLAN), 73-112 (DDLA…AVGK), 115-154 (PQLA…YIAR), 157-196 (TELS…DISK), 199-238 (PELA…QIAK), 241-280 (VDLA…EIAK), 325-365 (ENLA…QLGR), and 402-441 (KAIK…KVLP).

Interacts with SPAG16 and SPAG17. Highly expressed in testis. Not detected in prostate, ovary, spleen, thymus, small intestine, colon and peripheral blood leukocytes.

The protein resides in the cytoplasm. It localises to the cytoskeleton. It is found in the cell projection. The protein localises to the cilium. Its subcellular location is the flagellum. The protein resides in the cilium axoneme. Functionally, important for structural integrity of the central apparatus in the sperm tail and for flagellar motility. This Mus musculus (Mouse) protein is Sperm-associated antigen 6 (Spag6).